We begin with the raw amino-acid sequence, 289 residues long: Acetyl-coenzyme A carboxylase carboxyl transferase subunit beta (289 aa).

Residues 28–289 (VMTKCPKCKK…QGGEMAVWQS (262 aa)) form the CoA carboxyltransferase N-terminal domain. Residues Cys32, Cys35, Cys51, and Cys54 each contribute to the Zn(2+) site. A C4-type zinc finger spans residues 32–54 (CPKCKKIMYTKELLKNLKVCVNC).

The protein belongs to the AccD/PCCB family. Acetyl-CoA carboxylase is a heterohexamer composed of biotin carboxyl carrier protein (AccB), biotin carboxylase (AccC) and two subunits each of ACCase subunit alpha (AccA) and ACCase subunit beta (AccD). Zn(2+) serves as cofactor.

It localises to the cytoplasm. The catalysed reaction is N(6)-carboxybiotinyl-L-lysyl-[protein] + acetyl-CoA = N(6)-biotinyl-L-lysyl-[protein] + malonyl-CoA. It participates in lipid metabolism; malonyl-CoA biosynthesis; malonyl-CoA from acetyl-CoA: step 1/1. Component of the acetyl coenzyme A carboxylase (ACC) complex. Biotin carboxylase (BC) catalyzes the carboxylation of biotin on its carrier protein (BCCP) and then the CO(2) group is transferred by the transcarboxylase to acetyl-CoA to form malonyl-CoA. This chain is Acetyl-coenzyme A carboxylase carboxyl transferase subunit beta, found in Bacillus cereus (strain AH187).